The chain runs to 241 residues: MPTNGHKYSILMPTYNEKDNLPIIIWLIVKYMKASGLEYEVIVIDDGSPDGTLDVAKDLQKIYGEDKIVLRPRGSKLGLGTAYIHGIKHATGDFIVIIDADLSHHPKFIPEFIKLQQEGNYDIVSGTRYAGNGGVFGWDFKRKLISRGANFLSQVLLRPNASDLTGSFRLYKKDVLEKCIASCVSKGYVFQMEMLVRARQHGYTIAEVPITFVDRIYGTSKLGGTEIIQFAKNLLYLFATT.

The GDP-alpha-D-mannose site is built by P13, Y15, E17, I44, D46, D99, A100, D101, R128, R215, and K221. D101 is a Mg(2+) binding site. D101 is a binding site for Mn(2+).

This sequence belongs to the glycosyltransferase 2 family. The cofactor is Mg(2+). Mn(2+) serves as cofactor. It depends on Ca(2+) as a cofactor.

The protein resides in the endoplasmic reticulum. The enzyme catalyses a di-trans,poly-cis-dolichyl phosphate + GDP-alpha-D-mannose = a di-trans,poly-cis-dolichyl beta-D-mannosyl phosphate + GDP. Its pathway is protein modification; protein glycosylation. Its function is as follows. Transfers mannose from GDP-mannose to dolichol monophosphate to form dolichol phosphate mannose (Dol-P-Man) which is the mannosyl donor in pathways leading to N-glycosylation, glycosyl phosphatidylinositol membrane anchoring, and O-mannosylation of proteins. This chain is Dolichol-phosphate mannosyltransferase subunit 1, found in Drosophila melanogaster (Fruit fly).